A 694-amino-acid polypeptide reads, in one-letter code: Polyphosphate kinase (694 aa).

N45 contributes to the ATP binding site. Mg(2+)-binding residues include R367 and R397. H427 acts as the Phosphohistidine intermediate in catalysis. ATP contacts are provided by Y460, R553, and H580.

The protein belongs to the polyphosphate kinase 1 (PPK1) family. It depends on Mg(2+) as a cofactor. Post-translationally, an intermediate of this reaction is the autophosphorylated ppk in which a phosphate is covalently linked to a histidine residue through a N-P bond.

It catalyses the reaction [phosphate](n) + ATP = [phosphate](n+1) + ADP. In terms of biological role, catalyzes the reversible transfer of the terminal phosphate of ATP to form a long-chain polyphosphate (polyP). The polypeptide is Polyphosphate kinase (Campylobacter jejuni subsp. doylei (strain ATCC BAA-1458 / RM4099 / 269.97)).